Reading from the N-terminus, the 118-residue chain is Protein TusC (118 aa).

It belongs to the DsrF/TusC family. In terms of assembly, heterohexamer, formed by a dimer of trimers. The hexameric TusBCD complex contains 2 copies each of TusB, TusC and TusD. The TusBCD complex interacts with TusE.

The protein localises to the cytoplasm. Its function is as follows. Part of a sulfur-relay system required for 2-thiolation of 5-methylaminomethyl-2-thiouridine (mnm(5)s(2)U) at tRNA wobble positions. In Salmonella typhimurium (strain LT2 / SGSC1412 / ATCC 700720), this protein is Protein TusC.